Consider the following 506-residue polypeptide: D-alanine--D-alanyl carrier protein ligase (506 aa).

152-153 (TS) serves as a coordination point for ATP. Residue D197 participates in D-alanine binding. Position 292–297 (292–297 (NTYGPT)) interacts with ATP. A D-alanine-binding site is contributed by V301. ATP contacts are provided by residues D383, 395–398 (YRGR), and K494. A D-alanine-binding site is contributed by K494.

It belongs to the ATP-dependent AMP-binding enzyme family. DltA subfamily.

It localises to the cytoplasm. The enzyme catalyses holo-[D-alanyl-carrier protein] + D-alanine + ATP = D-alanyl-[D-alanyl-carrier protein] + AMP + diphosphate. It participates in cell wall biogenesis; lipoteichoic acid biosynthesis. Its function is as follows. Catalyzes the first step in the D-alanylation of lipoteichoic acid (LTA), the activation of D-alanine and its transfer onto the D-alanyl carrier protein (Dcp) DltC. In an ATP-dependent two-step reaction, forms a high energy D-alanyl-AMP intermediate, followed by transfer of the D-alanyl residue as a thiol ester to the phosphopantheinyl prosthetic group of the Dcp. D-alanylation of LTA plays an important role in modulating the properties of the cell wall in Gram-positive bacteria, influencing the net charge of the cell wall. This is D-alanine--D-alanyl carrier protein ligase from Lacticaseibacillus paracasei (strain ATCC 334 / BCRC 17002 / CCUG 31169 / CIP 107868 / KCTC 3260 / NRRL B-441) (Lactobacillus paracasei).